Reading from the N-terminus, the 358-residue chain is Gentisate 1,2-dioxygenase (358 aa).

The region spanning 99–165 is the Cupin type-2 domain; it reads QYLGPREVAP…VTDEPMAWLD (67 aa). Residues 185–215 form a disordered region; it reads DELSTRETPERSRGERLWGHPGLRPIGRPDQ. A compositionally biased stretch (basic and acidic residues) spans 187-202; it reads LSTRETPERSRGERLW.

Belongs to the gentisate 1,2-dioxygenase family.

It carries out the reaction 2,5-dihydroxybenzoate + O2 = 3-maleylpyruvate + H(+). In terms of biological role, involved in the degradation of salicylate via a pathway involving coenzyme A derivative. Catalyzes the oxygen-dependent ring fission of gentisate between the carboxyl and proximal hydroxyl groups at positions 1 and 2 of the aromatic ring to form maleylpyruvate. The substrate specificity is strong, since salicylate, catechol, protocatechuic acid, homogenetisate, 2,3-dihydroxybenzoate or 5-aminosalicylate cannot substitute for gentisate in the ring cleavage reaction. In Streptomyces sp, this protein is Gentisate 1,2-dioxygenase.